The following is a 239-amino-acid chain: Ribonuclease 3 (239 aa).

Residues 18–141 (YTTLEKALGY…LMAGVYLEAG (124 aa)) enclose the RNase III domain. E54 is a binding site for Mg(2+). D58 is an active-site residue. The Mg(2+) site is built by S127 and E130. The active site involves E130. The region spanning 168-237 (DYKTALQELT…AYQALQKLKE (70 aa)) is the DRBM domain.

Belongs to the ribonuclease III family. In terms of assembly, homodimer. It depends on Mg(2+) as a cofactor.

The protein localises to the cytoplasm. The enzyme catalyses Endonucleolytic cleavage to 5'-phosphomonoester.. Its function is as follows. Digests double-stranded RNA. Involved in the processing of primary rRNA transcript to yield the immediate precursors to the large and small rRNAs (23S and 16S). Processes some mRNAs, and tRNAs when they are encoded in the rRNA operon. Processes pre-crRNA and tracrRNA of type II CRISPR loci if present in the organism. This Helicobacter pylori (strain ATCC 700392 / 26695) (Campylobacter pylori) protein is Ribonuclease 3.